Reading from the N-terminus, the 214-residue chain is GTP-binding nuclear protein GSP1/Ran (214 aa).

The 165-residue stretch at 4–168 (EVPTFKLVLV…LWLARKLAGN (165 aa)) folds into the Small GTPase Ran-type domain. 15-22 (DGGTGKTT) contacts GTP. A switch-I region spans residues 34 to 42 (KKYIATIGV). GTP-binding positions include Gly65, 119 to 122 (NKVD), and 147 to 149 (SAK). The tract at residues 65-81 (GQEKFGGLRDGYYINAQ) is switch-II.

It belongs to the small GTPase superfamily. Ran family. As to quaternary structure, found in a nuclear export complex with RanGTP, exportin and pre-miRNA.

The protein localises to the nucleus. GTP-binding protein involved in nucleocytoplasmic transport. Required for the import of protein into the nucleus and also for RNA export. Involved in chromatin condensation and control of cell cycle. The sequence is that of GTP-binding nuclear protein GSP1/Ran (GSP1) from Candida glabrata (strain ATCC 2001 / BCRC 20586 / JCM 3761 / NBRC 0622 / NRRL Y-65 / CBS 138) (Yeast).